Reading from the N-terminus, the 129-residue chain is Large ribosomal subunit protein bL17 (129 aa).

Belongs to the bacterial ribosomal protein bL17 family. Part of the 50S ribosomal subunit. Contacts protein L32.

The sequence is that of Large ribosomal subunit protein bL17 from Polynucleobacter asymbioticus (strain DSM 18221 / CIP 109841 / QLW-P1DMWA-1) (Polynucleobacter necessarius subsp. asymbioticus).